Reading from the N-terminus, the 560-residue chain is Hypermethylated in cancer 2 protein (560 aa).

Residues 24 to 87 form the BTB domain; the sequence is CDVIIVVENA…IYTGKLLSSD (64 aa). Disordered regions lie at residues 122–163 and 183–367; these read RSLL…KTKR and HCTT…GGRN. Polar residues-rich tracts occupy residues 126–153 and 183–203; these read NKPTTPTNGRTSRNQRLSSTPVTPNQMS and HCTTSNSLSPSTSKNGSNGSC. A compositionally biased stretch (low complexity) spans 224-242; the sequence is EEVSPSSIPQESPQSASES. Positions 243–259 are enriched in polar residues; sequence TANSASFDENPNTQNLT. A compositionally biased stretch (basic and acidic residues) spans 296-308; that stretch reads PKSEGKKGEDMER. Residues 348–362 show a composition bias toward low complexity; that stretch reads ENGQEQSEESGQSEN. 5 consecutive C2H2-type zinc fingers follow at residues 387 to 409, 450 to 472, 478 to 500, 506 to 528, and 534 to 556; these read YVCIPCGKGFPSSEELNAHVETH, FSCSVCNKSYKDPATLRQHEKTH, FPCNICGKMFTQRGTMTRHMRSH, FACEECGMRFTRQYRLTEHMRVH, and YECQLCGGKFTQQRNLISHLRMH.

This sequence belongs to the krueppel C2H2-type zinc-finger protein family. Hic subfamily.

The protein localises to the nucleus. Its function is as follows. Transcriptional repressor. This Danio rerio (Zebrafish) protein is Hypermethylated in cancer 2 protein (hic2).